Consider the following 382-residue polypeptide: Mannitol-1-phosphate 5-dehydrogenase (382 aa).

Residue A3–G14 coordinates NAD(+).

Belongs to the mannitol dehydrogenase family.

It carries out the reaction D-mannitol 1-phosphate + NAD(+) = beta-D-fructose 6-phosphate + NADH + H(+). The polypeptide is Mannitol-1-phosphate 5-dehydrogenase (Salmonella enteritidis PT4 (strain P125109)).